The chain runs to 313 residues: uncharacterized protein (313 aa).

This is an uncharacterized protein from Bacillus subtilis (strain 168).